We begin with the raw amino-acid sequence, 151 residues long: MQKKLQVEAIEHGSVIDHIPVQQGVKIIRFFNLTQTNEKITIGLNLATHTGQKKDLIKVENTFISDKQANQLALFAPHATINQIKDFKVVNKFQVQLPDSFIDVLACPNSNCISHHEPVDTRFYVKKKSTLKLKCHYCEKTFDHLFFSELD.

Cys-107, Cys-112, Cys-135, and Cys-138 together coordinate Zn(2+).

Belongs to the PyrI family. As to quaternary structure, contains catalytic and regulatory chains. It depends on Zn(2+) as a cofactor.

In terms of biological role, involved in allosteric regulation of aspartate carbamoyltransferase. The polypeptide is Aspartate carbamoyltransferase regulatory chain (Psychromonas ingrahamii (strain DSM 17664 / CCUG 51855 / 37)).